Here is a 316-residue protein sequence, read N- to C-terminus: Olfactory receptor 2T11 (316 aa).

The Extracellular segment spans residues 1–22; it reads MTNTSSSDFTLLGLLVNSEAAG. The N-linked (GlcNAc...) asparagine glycan is linked to asparagine 3. A helical membrane pass occupies residues 23-46; sequence IVFTVILAVFLGAVTANLVMIFLI. At 47 to 54 the chain is on the cytoplasmic side; the sequence is QVDSRLHT. A helical membrane pass occupies residues 55-76; sequence PMYFLLSQLSIMDTLFICTTVP. At 77-97 the chain is on the extracellular side; sequence KLLADMVSKEKIISFVACGIQ. A disulfide bond links cysteine 94 and cysteine 186. A helical membrane pass occupies residues 98–117; sequence IFLYLTMIGSEFFLLGLMAY. Residues 118–136 lie on the Cytoplasmic side of the membrane; the sequence is DCYVAVCNPLRYPVLMNRK. A helical membrane pass occupies residues 137–155; the sequence is KCLLLAAGAWFGGSLDGFL. Residues 156–192 lie on the Extracellular side of the membrane; it reads LTPITMNVPYCGSRSINHFFCEIPAVLKLACADTSLY. Residues 193–216 form a helical membrane-spanning segment; that stretch reads ETLMYICCVLMLLIPISIISTSYS. At 217 to 233 the chain is on the cytoplasmic side; that stretch reads LILLTIHRMPSAEGRKK. The chain crosses the membrane as a helical span at residues 234 to 256; it reads AFTTCSSHLTVVSIFYGAAFYTY. At 257–269 the chain is on the extracellular side; sequence VLPQSFHTPEQDK. A helical transmembrane segment spans residues 270–289; that stretch reads VVSAFYTIVTPMLNPLIYSL. The Cytoplasmic portion of the chain corresponds to 290 to 316; the sequence is RNKDVIGAFKKVFACCSSAQKVATSDA.

This sequence belongs to the G-protein coupled receptor 1 family.

It is found in the cell membrane. Odorant receptor. The polypeptide is Olfactory receptor 2T11 (OR2T11) (Homo sapiens (Human)).